Reading from the N-terminus, the 364-residue chain is 3-isopropylmalate dehydrogenase (364 aa).

78–91 (GKKWDNFPIEERPE) serves as a coordination point for NAD(+). Substrate-binding residues include Arg99, Arg109, Arg138, and Asp228. Mg(2+) contacts are provided by Asp228, Asp252, and Asp256. An NAD(+)-binding site is contributed by 286–298 (GSAPDIAGKNIAN).

Belongs to the isocitrate and isopropylmalate dehydrogenases family. LeuB type 1 subfamily. As to quaternary structure, homodimer. The cofactor is Mg(2+). Mn(2+) is required as a cofactor.

The protein resides in the cytoplasm. It catalyses the reaction (2R,3S)-3-isopropylmalate + NAD(+) = 4-methyl-2-oxopentanoate + CO2 + NADH. It functions in the pathway amino-acid biosynthesis; L-leucine biosynthesis; L-leucine from 3-methyl-2-oxobutanoate: step 3/4. Catalyzes the oxidation of 3-carboxy-2-hydroxy-4-methylpentanoate (3-isopropylmalate) to 3-carboxy-4-methyl-2-oxopentanoate. The product decarboxylates to 4-methyl-2 oxopentanoate. In Buchnera aphidicola subsp. Uroleucon obscurum, this protein is 3-isopropylmalate dehydrogenase.